The sequence spans 389 residues: Succinate--CoA ligase [ADP-forming] subunit beta (389 aa).

The ATP-grasp domain occupies 9–236 (RDMFEAHGVP…KDSADPLEAK (228 aa)). Residues lysine 45, 52–54 (GRG), alanine 94, and glutamate 99 contribute to the ATP site. Mg(2+)-binding residues include asparagine 191 and aspartate 205. Substrate contacts are provided by residues asparagine 256 and 318–320 (GIT).

The protein belongs to the succinate/malate CoA ligase beta subunit family. As to quaternary structure, heterotetramer of two alpha and two beta subunits. Mg(2+) serves as cofactor.

The catalysed reaction is succinate + ATP + CoA = succinyl-CoA + ADP + phosphate. It carries out the reaction GTP + succinate + CoA = succinyl-CoA + GDP + phosphate. The protein operates within carbohydrate metabolism; tricarboxylic acid cycle; succinate from succinyl-CoA (ligase route): step 1/1. Its function is as follows. Succinyl-CoA synthetase functions in the citric acid cycle (TCA), coupling the hydrolysis of succinyl-CoA to the synthesis of either ATP or GTP and thus represents the only step of substrate-level phosphorylation in the TCA. The beta subunit provides nucleotide specificity of the enzyme and binds the substrate succinate, while the binding sites for coenzyme A and phosphate are found in the alpha subunit. In Renibacterium salmoninarum (strain ATCC 33209 / DSM 20767 / JCM 11484 / NBRC 15589 / NCIMB 2235), this protein is Succinate--CoA ligase [ADP-forming] subunit beta.